Here is a 188-residue protein sequence, read N- to C-terminus: Elongation factor P (188 aa).

This sequence belongs to the elongation factor P family.

The protein localises to the cytoplasm. The protein operates within protein biosynthesis; polypeptide chain elongation. Involved in peptide bond synthesis. Stimulates efficient translation and peptide-bond synthesis on native or reconstituted 70S ribosomes in vitro. Probably functions indirectly by altering the affinity of the ribosome for aminoacyl-tRNA, thus increasing their reactivity as acceptors for peptidyl transferase. This chain is Elongation factor P, found in Rickettsia typhi (strain ATCC VR-144 / Wilmington).